Consider the following 343-residue polypeptide: MDFLVLFSFYLAFLLICVIMICIFTKSQRLKAVVLGGAQVCARVTPQCFQRAVQTLLHQLFHTRHPAFLALHLLLQGLVYAEYTYEVFSYCRELEFSLPCLLLPYVLLSVNLVFFTLTCSTNPGTITKTNVLLLLQVYEFDEVMFPKNSRCSTCDLRKPARSKHCRVCDRCVHRFDHHCVWVNNCIGAWNTGYFLIYLLTLTASAATIAILSAAFLLRLVAVSNLYQETYLDDLGRFQAVDTGFLIQHLFLAFPRIIFLLGFVIVLSLLLAGYLCFALYLAATNQTTNEWYRGDWAWCQHWPLVAWSPSAEPQIHQNIYSHGLWSNLQEVFIPATPSYKKKKR.

Over 1-2 (MD) the chain is Lumenal. Residues 3 to 23 (FLVLFSFYLAFLLICVIMICI) form a helical membrane-spanning segment. At 24–67 (FTKSQRLKAVVLGGAQVCARVTPQCFQRAVQTLLHQLFHTRHPA) the chain is on the cytoplasmic side. A helical membrane pass occupies residues 68–88 (FLALHLLLQGLVYAEYTYEVF). Over 89 to 95 (SYCRELE) the chain is Lumenal. The chain crosses the membrane as a helical span at residues 96–116 (FSLPCLLLPYVLLSVNLVFFT). The Cytoplasmic segment spans residues 117–193 (LTCSTNPGTI…NCIGAWNTGY (77 aa)). The DHHC domain maps to 149–199 (SRCSTCDLRKPARSKHCRVCDRCVHRFDHHCVWVNNCIGAWNTGYFLIYLL). Cys-179 functions as the S-palmitoyl cysteine intermediate in the catalytic mechanism. Residues 194–214 (FLIYLLTLTASAATIAILSAA) traverse the membrane as a helical segment. At 215–255 (FLLRLVAVSNLYQETYLDDLGRFQAVDTGFLIQHLFLAFPR) the chain is on the lumenal side. A helical membrane pass occupies residues 256–276 (IIFLLGFVIVLSLLLAGYLCF). The Cytoplasmic segment spans residues 277-343 (ALYLAATNQT…ATPSYKKKKR (67 aa)). The Di-lysine motif signature appears at 340–343 (KKKR).

This sequence belongs to the DHHC palmitoyltransferase family. In terms of assembly, interacts with CPT1A.

The protein localises to the endoplasmic reticulum membrane. The protein resides in the golgi apparatus membrane. It localises to the cell membrane. It carries out the reaction L-cysteinyl-[protein] + hexadecanoyl-CoA = S-hexadecanoyl-L-cysteinyl-[protein] + CoA. Its function is as follows. Palmitoyltransferase that could catalyze the addition of palmitate onto protein substrates including the D(2) dopamine receptor DRD2, GSK3B or MAVS. Mediates GSK3B palmitoylation to prevent its AKT1-mediated phosphorylation leading to activation of the STAT3 signaling pathway. Also catalyzes MAVS palmitoylation which promotes its stabilization and activation by inhibiting 'Lys-48'- but facilitating 'Lys-63'-linked ubiquitination. The polypeptide is Palmitoyltransferase ZDHHC4 (Rattus norvegicus (Rat)).